We begin with the raw amino-acid sequence, 475 residues long: Dihydrolipoyl dehydrogenase (475 aa).

FAD contacts are provided by residues 36 to 45 (ERYSTLGGVC), Lys-54, and Gly-117. Cysteines 45 and 50 form a disulfide. NAD(+) contacts are provided by residues 182–186 (GGGII), Glu-205, Val-238, and 270–273 (AIGR). FAD is bound by residues Asp-313 and Ala-321. The active-site Proton acceptor is His-445.

This sequence belongs to the class-I pyridine nucleotide-disulfide oxidoreductase family. Requires FAD as cofactor.

It is found in the cytoplasm. It carries out the reaction N(6)-[(R)-dihydrolipoyl]-L-lysyl-[protein] + NAD(+) = N(6)-[(R)-lipoyl]-L-lysyl-[protein] + NADH + H(+). Its function is as follows. The branched-chain alpha-keto dehydrogenase complex catalyzes the overall conversion of alpha-keto acids to acyl-CoA and CO(2). It contains multiple copies of 3 enzymatic components: branched-chain alpha-keto acid decarboxylase (E1), lipoamide acyltransferase (E2) and lipoamide dehydrogenase (E3). The chain is Dihydrolipoyl dehydrogenase (lpd) from Vibrio parahaemolyticus serotype O3:K6 (strain RIMD 2210633).